Consider the following 238-residue polypeptide: MGNSALKAHLETSQKTGVFQLTGKGLTEFPEDLQKLTANLRTVDLSNNKIEELPAFIGSFQHLKSFTISCNKLTSLPNDIGKLKKLETLILNGNQLKQLPSSIGQLKSLRTLSLSGNQFKEFPSGLGTLRQLDVLDLSKNQIRVVPAEVAELQAIEINLNQNQISSVTQEVSRTPRLKVLRLEENCLELSSIPLSILTDSQVSLLSVEGNLFEVKKMRDLEGYDKYMERFTATKKKFA.

LRR repeat units follow at residues 10 to 36, 37 to 62, 64 to 82, 83 to 106, 108 to 128, 129 to 152, 154 to 173, and 174 to 199; these read LETS…LQKL, TANL…SFQH, KSFT…DIGK, LKKL…IGQL, SLRT…GLGT, LRQL…VAEL, AIEI…EVSR, and TPRL…ILTD.

This Danio rerio (Zebrafish) protein is Leucine-rich repeat-containing protein 57 (lrrc57).